We begin with the raw amino-acid sequence, 214 residues long: Ribonuclease HII (214 aa).

The 191-residue stretch at 18–208 (SRVVGVDEVG…SLLPSEAHLC (191 aa)) folds into the RNase H type-2 domain. A divalent metal cation contacts are provided by Asp24, Glu25, and Asp116.

Belongs to the RNase HII family. It depends on Mn(2+) as a cofactor. Requires Mg(2+) as cofactor.

It localises to the cytoplasm. The catalysed reaction is Endonucleolytic cleavage to 5'-phosphomonoester.. Endonuclease that specifically degrades the RNA of RNA-DNA hybrids. The sequence is that of Ribonuclease HII from Thermosynechococcus vestitus (strain NIES-2133 / IAM M-273 / BP-1).